The chain runs to 525 residues: Phosphoenolpyruvate carboxykinase (ATP) (525 aa).

3 residues coordinate substrate: R54, Y190, and K196. ATP-binding positions include K196, H215, and 231–239; that span reads GLSGTGKTT. Residues K196 and H215 each contribute to the Mn(2+) site. D252 contacts Mn(2+). ATP contacts are provided by E280, R316, and T441. Position 316 (R316) interacts with substrate.

Belongs to the phosphoenolpyruvate carboxykinase (ATP) family. It depends on Mn(2+) as a cofactor.

The protein localises to the cytoplasm. The catalysed reaction is oxaloacetate + ATP = phosphoenolpyruvate + ADP + CO2. The protein operates within carbohydrate biosynthesis; gluconeogenesis. Involved in the gluconeogenesis. Catalyzes the conversion of oxaloacetate (OAA) to phosphoenolpyruvate (PEP) through direct phosphoryl transfer between the nucleoside triphosphate and OAA. In Nitratiruptor sp. (strain SB155-2), this protein is Phosphoenolpyruvate carboxykinase (ATP).